We begin with the raw amino-acid sequence, 296 residues long: Protoheme IX farnesyltransferase (296 aa).

Residues 1–9 (MMFKQYLQV) are Cytoplasmic-facing. The helical transmembrane segment at 10 to 28 (TKPGIIFGNLISVIGGFLL) threads the bilayer. Topologically, residues 29–37 (ASKGSIDYP) are periplasmic. The chain crosses the membrane as a helical span at residues 38–56 (LFIYTLVGVSLVVASGCVF). Residues 57-78 (NNYIDRDIDRKMERTKNRVLVK) lie on the Cytoplasmic side of the membrane. The chain crosses the membrane as a helical span at residues 79-97 (GLISPGVSLVYATLLGIAG). At 98-107 (FMLLWFGANP) the chain is on the periplasmic side. Residues 108 to 126 (LACWLGVMGFVVYVGVYSL) traverse the membrane as a helical segment. The Cytoplasmic portion of the chain corresponds to 127 to 197 (YMKRHSVYGT…YQAANIPVLP (71 aa)). The chain crosses the membrane as a helical span at residues 198–216 (VVKGISVAKNHITLYIIAF). At 217-228 (AVATLMLTLGGY) the chain is on the periplasmic side. A helical transmembrane segment spans residues 229 to 247 (AGYKYLVVAAAVSVWWLGM). Residues 248-268 (ALRGYKVEDDKVWARKLFGFS) are Cytoplasmic-facing. The chain crosses the membrane as a helical span at residues 269–287 (IIAITALSIMMSVDFMVPN). At 288 to 296 (SQNLLTYVW) the chain is on the periplasmic side.

Belongs to the UbiA prenyltransferase family. Protoheme IX farnesyltransferase subfamily.

It is found in the cell inner membrane. The catalysed reaction is heme b + (2E,6E)-farnesyl diphosphate + H2O = Fe(II)-heme o + diphosphate. Its pathway is porphyrin-containing compound metabolism; heme O biosynthesis; heme O from protoheme: step 1/1. Its function is as follows. Converts heme B (protoheme IX) to heme O by substitution of the vinyl group on carbon 2 of heme B porphyrin ring with a hydroxyethyl farnesyl side group. In Salmonella typhimurium (strain LT2 / SGSC1412 / ATCC 700720), this protein is Protoheme IX farnesyltransferase.